Reading from the N-terminus, the 69-residue chain is Protein transport protein Sec61 subunit gamma-1 (69 aa).

Met1 carries the post-translational modification N-acetylmethionine. Residues 1-32 (MDAIDSVVDPLRDFAKDSIRLVKRCHKPDRKE) lie on the Cytoplasmic side of the membrane. The chain crosses the membrane as a helical span at residues 33 to 61 (FTKVAVRTAIGFVVMGFVGFFVKLIFIPI). The Extracellular segment spans residues 62–69 (NNIIVGAT).

Belongs to the SecE/SEC61-gamma family. In terms of assembly, heterotrimeric complex composed of SEC61-alpha, SEC61-beta and SEC61-gamma.

Its subcellular location is the endoplasmic reticulum membrane. Functionally, necessary for protein translocation in the endoplasmic reticulum. This chain is Protein transport protein Sec61 subunit gamma-1 (SEC61G1), found in Arabidopsis thaliana (Mouse-ear cress).